Consider the following 445-residue polypeptide: C4-dicarboxylate transport protein (445 aa).

Helical transmembrane passes span 24–44, 62–82, 105–125, 163–183, 201–221, 237–257, 322–342, and 370–390; these read VLYIQVLIAIVLGVLVGWLSP, LIKMVIAPIIFCTVVSGIAHI, FALILGLVVGNLLPVGHGLAA, GDILQVLLFAILFGFALMALG, FGVIAIVMKAAPVGAFGAMAF, LVALFYATAALFVFVVLGVIA, IYMTLATLFIAQALGIELSFS, and AGTLAAVNPALVPGMAIVFSI.

It belongs to the dicarboxylate/amino acid:cation symporter (DAACS) (TC 2.A.23) family.

The protein localises to the cell inner membrane. Functionally, responsible for the transport of dicarboxylates such as succinate, fumarate, and malate from the periplasm across the membrane. This chain is C4-dicarboxylate transport protein, found in Rhodopseudomonas palustris (strain HaA2).